Reading from the N-terminus, the 37-residue chain is Conotoxin r11e (37 aa).

Intrachain disulfides connect Cys-2–Cys-16, Cys-9–Cys-21, Cys-15–Cys-26, and Cys-20–Cys-33. 4-carboxyglutamate occurs at positions 13 and 14. 6'-bromotryptophan is present on Trp-34.

Expressed by the venom duct.

It localises to the secreted. In terms of biological role, causes hyperactivity, circular motion, convulsion, urination and death, when injected into 13- to 15-day-old mice. Causes gasping, backward swimming or swimming in a vertical direction and death, when intraperitoneally injected into goldfish. This is Conotoxin r11e from Conus radiatus (Rayed cone).